Here is a 596-residue protein sequence, read N- to C-terminus: Chitooligosaccharidolytic beta-N-acetylglucosaminidase (596 aa).

Positions 1 to 23 are cleaved as a signal peptide; sequence MWLQAICIYTVFIIIGCGIPTAA. Residues Asn-166, Asn-264, and Asn-377 are each glycosylated (N-linked (GlcNAc...) asparagine).

Belongs to the glycosyl hydrolase 20 family.

It catalyses the reaction Hydrolysis of terminal non-reducing N-acetyl-D-hexosamine residues in N-acetyl-beta-D-hexosaminides.. Its function is as follows. Active during metamorphosis to degrade chitin. The protein is Chitooligosaccharidolytic beta-N-acetylglucosaminidase of Bombyx mori (Silk moth).